The following is a 70-amino-acid chain: Alpha-conotoxin EIIB (70 aa).

An N-terminal signal peptide occupies residues 1-21 (MGMRMMFIVFLLVVLATTVVS). The propeptide occupies 22–51 (FTLDHVLGLASEGRNAKAIDNALDQRDPKR). Glutamine 52 is subject to Pyrrolidone carboxylic acid. Residue proline 54 is modified to Hydroxyproline. Cystine bridges form between cysteine 56–cysteine 62 and cysteine 57–cysteine 67. Cysteine 67 carries the post-translational modification Cysteine amide.

Expressed by the venom duct.

It is found in the secreted. Functionally, alpha-conotoxins bind to the nicotinic acetylcholine receptors (nAChR) and inhibit them. This peptide potently blocks muscular nicotinic acetylcholine receptor (CHRNA1-CHRNB1-CHRNG-CHRND), and has no effect on neuronal receptors. It is able to totally displace [125I]-Bgtx from the Torpedo receptor with an inhibition constant (Ki) of 2.2 and 0.7 nM. This chain is Alpha-conotoxin EIIB, found in Conus ermineus (Agate cone).